Reading from the N-terminus, the 365-residue chain is UDP-N-acetylglucosamine--N-acetylmuramyl-(pentapeptide) pyrophosphoryl-undecaprenol N-acetylglucosamine transferase (365 aa).

UDP-N-acetyl-alpha-D-glucosamine is bound by residues 11–13, Asn124, Arg165, Ser192, Ile246, and Gln291; that span reads TGG.

It belongs to the glycosyltransferase 28 family. MurG subfamily.

The protein resides in the cell inner membrane. It catalyses the reaction di-trans,octa-cis-undecaprenyl diphospho-N-acetyl-alpha-D-muramoyl-L-alanyl-D-glutamyl-meso-2,6-diaminopimeloyl-D-alanyl-D-alanine + UDP-N-acetyl-alpha-D-glucosamine = di-trans,octa-cis-undecaprenyl diphospho-[N-acetyl-alpha-D-glucosaminyl-(1-&gt;4)]-N-acetyl-alpha-D-muramoyl-L-alanyl-D-glutamyl-meso-2,6-diaminopimeloyl-D-alanyl-D-alanine + UDP + H(+). Its pathway is cell wall biogenesis; peptidoglycan biosynthesis. In terms of biological role, cell wall formation. Catalyzes the transfer of a GlcNAc subunit on undecaprenyl-pyrophosphoryl-MurNAc-pentapeptide (lipid intermediate I) to form undecaprenyl-pyrophosphoryl-MurNAc-(pentapeptide)GlcNAc (lipid intermediate II). This is UDP-N-acetylglucosamine--N-acetylmuramyl-(pentapeptide) pyrophosphoryl-undecaprenol N-acetylglucosamine transferase from Nitratidesulfovibrio vulgaris (strain DP4) (Desulfovibrio vulgaris).